The chain runs to 944 residues: Lactoferrin-binding protein A (944 aa).

A signal peptide spans 1–27; that stretch reads MNKKHGFSLTLTALAIAAAFPSYAANP. The 127-residue stretch at 52–178 folds into the TBDR plug domain; sequence RRSKEATGLG…LGGAVAFRTK (127 aa). Residues 189–944 form the TBDR beta-barrel domain; sequence SWGIQAKTAY…NFSLALEMKF (756 aa). A TonB C-terminal box motif is present at residues 927 to 944; the sequence is GRYAAPGRNFSLALEMKF.

It belongs to the TonB-dependent receptor family.

The protein resides in the cell outer membrane. Unknown. May be an iron-siderophore receptor. This is Lactoferrin-binding protein A (lbpA) from Neisseria meningitidis serogroup A / serotype 4A (strain DSM 15465 / Z2491).